Here is a 29-residue protein sequence, read N- to C-terminus: Thrombin-like enzyme collinein-2 (29 aa).

Monomer. As to expression, expressed by the venom gland.

Its subcellular location is the secreted. In terms of biological role, thrombin-like snake venom serine protease. In Crotalus durissus collilineatus (Brazilian rattlesnake), this protein is Thrombin-like enzyme collinein-2.